The chain runs to 219 residues: Elongation factor Ts, chloroplastic (219 aa).

It belongs to the EF-Ts family.

It localises to the plastid. The protein localises to the chloroplast. Functionally, associates with the EF-Tu.GDP complex and induces the exchange of GDP to GTP. It remains bound to the aminoacyl-tRNA.EF-Tu.GTP complex up to the GTP hydrolysis stage on the ribosome. In Rhodomonas salina (Cryptomonas salina), this protein is Elongation factor Ts, chloroplastic (tsf).